The primary structure comprises 634 residues: MFEVKLKDGSAKEFDGEISLLDVCKSISEGLARDCVGAVVDGKIMGLMETIDSDCEVQFVKFDDDEGKQVFWHTSSHLMAYAIQRLYPGTKFAIGPSIDSGFYYDLDTDHKFVPEDLEKIEAEMKKIVKENPKLVRVEISRKEALERFKNEGQDYKVDLIENFDEDATITLYEMGDFVDLCRGPHLLDVKNIKAFKLLSIAGAYWRGDENNKMLQRIYGISFPKKKLLDEYLDRMEEAKKRDHRKIGKEMGLFSIQEEGPGFPFFHPNGMVVLNELEKFLKEQLLERGYGQIKTPLILNEHLWHQSGHWDHYKENMYFTKIDGEDYAIKPMNCPGSILVYKDELHSYRELPIKVAELGQVHRHELSGALHGLFRVRTFVQDDAHVFCLPEQIEEEVSKTIDFCDYIYSKFGFKYEVELSTRPEDSMGSDEDWDLAISSLKNALEHKGLPYKINEGDGAFYGPKIDFHLEDAIGRTWQCGTIQLDFQMPERFDMTYIASDGSKKRPAMIHRAILGSEERFMGILIEHYAGKFPLWLSPVQVEILPISDKFNDYAYELQQKMKARGLRVKVDDRSEKIGLKIRESQLKKVNYSLIIGQNEIDNNEVSVRKRDIGDVGSKNTDEFINELVDEYQNRK.

The region spanning 1 to 61 (MFEVKLKDGS…DSDCEVQFVK (61 aa)) is the TGS domain. The catalytic stretch occupies residues 242–532 (DHRKIGKEMG…LIEHYAGKFP (291 aa)). 3 residues coordinate Zn(2+): Cys333, His384, and His509.

Belongs to the class-II aminoacyl-tRNA synthetase family. Homodimer. Zn(2+) serves as cofactor.

The protein localises to the cytoplasm. The enzyme catalyses tRNA(Thr) + L-threonine + ATP = L-threonyl-tRNA(Thr) + AMP + diphosphate + H(+). In terms of biological role, catalyzes the attachment of threonine to tRNA(Thr) in a two-step reaction: L-threonine is first activated by ATP to form Thr-AMP and then transferred to the acceptor end of tRNA(Thr). Also edits incorrectly charged L-seryl-tRNA(Thr). This is Threonine--tRNA ligase from Finegoldia magna (strain ATCC 29328 / DSM 20472 / WAL 2508) (Peptostreptococcus magnus).